Here is a 349-residue protein sequence, read N- to C-terminus: Sesquiterpene synthase MAC_05714 (349 aa).

Residues D91 and D96 each contribute to the Mg(2+) site. A DDXXXD motif motif is present at residues 91 to 96 (DDLFVD). Position 184 (R184) interacts with substrate. N230, S234, and E238 together coordinate Mg(2+).

The protein belongs to the terpene synthase family. Requires Mg(2+) as cofactor.

It carries out the reaction (2E,6E)-farnesyl diphosphate + H2O = (+)-corvol ether B + diphosphate. It catalyses the reaction (2E,6E)-farnesyl diphosphate + H2O = (+)-corvol ether A + diphosphate. Its function is as follows. Terpene synthase that catalyzes the conversion of (2E,6E)-farnesyl diphosphate (FPP) into sesquiterpenes which are important for fungi-environment interactions. Produces a mixture consisting of 8 sesquiterpenes including corvol ethers A and B, as well as traces of epizonarene, gamma-cadinene, delta-cadinene, alpha-cadinene, alpha-cadinol, and an unidentified sesquiterpene. Produces both corvol ether A and corvol ether B in similar concentrations. The polypeptide is Sesquiterpene synthase MAC_05714 (Metarhizium acridum (strain CQMa 102)).